The chain runs to 138 residues: NADPH-dependent 7-cyano-7-deazaguanine reductase (138 aa).

Catalysis depends on Cys-53, which acts as the Thioimide intermediate. Catalysis depends on Asp-60, which acts as the Proton donor. Substrate contacts are provided by residues 75–77 (VEL) and 94–95 (HE).

It belongs to the GTP cyclohydrolase I family. QueF type 1 subfamily.

It localises to the cytoplasm. It catalyses the reaction 7-aminomethyl-7-carbaguanine + 2 NADP(+) = 7-cyano-7-deazaguanine + 2 NADPH + 3 H(+). The protein operates within tRNA modification; tRNA-queuosine biosynthesis. Catalyzes the NADPH-dependent reduction of 7-cyano-7-deazaguanine (preQ0) to 7-aminomethyl-7-deazaguanine (preQ1). In Gloeothece citriformis (strain PCC 7424) (Cyanothece sp. (strain PCC 7424)), this protein is NADPH-dependent 7-cyano-7-deazaguanine reductase.